The chain runs to 256 residues: Hydroxyacylglutathione hydrolase (256 aa).

Positions 58, 60, 62, 63, 116, 135, and 173 each coordinate Zn(2+).

The protein belongs to the metallo-beta-lactamase superfamily. Glyoxalase II family. In terms of assembly, monomer. Zn(2+) is required as a cofactor.

The catalysed reaction is an S-(2-hydroxyacyl)glutathione + H2O = a 2-hydroxy carboxylate + glutathione + H(+). It functions in the pathway secondary metabolite metabolism; methylglyoxal degradation; (R)-lactate from methylglyoxal: step 2/2. Its function is as follows. Thiolesterase that catalyzes the hydrolysis of S-D-lactoyl-glutathione to form glutathione and D-lactic acid. In Hyphomonas neptunium (strain ATCC 15444), this protein is Hydroxyacylglutathione hydrolase.